The primary structure comprises 416 residues: Beta sliding clamp (416 aa).

The protein belongs to the beta sliding clamp family. In terms of assembly, forms a ring-shaped head-to-tail homodimer around DNA which binds and tethers DNA polymerases and other proteins to the DNA. The DNA replisome complex has a single clamp-loading complex (3 tau and 1 each of delta, delta', psi and chi subunits) which binds 3 Pol III cores (1 core on the leading strand and 2 on the lagging strand) each with a beta sliding clamp dimer. Additional proteins in the replisome are other copies of gamma, psi and chi, Ssb, DNA helicase and RNA primase.

It is found in the cytoplasm. Its function is as follows. Confers DNA tethering and processivity to DNA polymerases and other proteins. Acts as a clamp, forming a ring around DNA (a reaction catalyzed by the clamp-loading complex) which diffuses in an ATP-independent manner freely and bidirectionally along dsDNA. Initially characterized for its ability to contact the catalytic subunit of DNA polymerase III (Pol III), a complex, multichain enzyme responsible for most of the replicative synthesis in bacteria; Pol III exhibits 3'-5' exonuclease proofreading activity. The beta chain is required for initiation of replication as well as for processivity of DNA replication. In Chlamydia trachomatis serovar D (strain ATCC VR-885 / DSM 19411 / UW-3/Cx), this protein is Beta sliding clamp (dnaN).